A 341-amino-acid polypeptide reads, in one-letter code: Fructose-1,6-bisphosphatase, cytosolic (341 aa).

Glu71, Glu100, Asp121, Leu123, and Asp124 together coordinate Mg(2+). Residues 124-127, Asn215, Tyr247, Tyr267, and Lys277 contribute to the substrate site; that span reads DGSS. Glu283 contributes to the Mg(2+) binding site.

It belongs to the FBPase class 1 family. The cofactor is Mg(2+).

The protein resides in the cytoplasm. It localises to the nucleus. The catalysed reaction is beta-D-fructose 1,6-bisphosphate + H2O = beta-D-fructose 6-phosphate + phosphate. Its function is as follows. Catalyzes the first irreversible reaction from fructose-1,6-bisphosphate to fructose-6-phosphate and inorganic phosphate and plays an important regulatory role in sucrose biosynthesis and metabolism. Its activity is essential to regulate starch levels. Functions in fructose-mediated signaling independently of its catalytic activity in sugar metabolism. May act downstream of ABA2/GIN1, which is involved in abscisic acid (ABA) synthesis to regulate autotrophic transition and modulate early seedling establishment after seed germination. The sequence is that of Fructose-1,6-bisphosphatase, cytosolic from Arabidopsis thaliana (Mouse-ear cress).